The chain runs to 225 residues: MMYHIPGVLSPQDVARFREQLEQAEWVDGRVTTGAQGAQVKNNQQVDTRSTLYAALQNEVLNAVNQHALFFAAALPRTLSTPLFNRYQNNETYGFHVDGAVRSHPQSGWMRTDLSATLFLSDPQSYDGGELVVNDTFGQHRVKLPAGDLVLYPSSSLHCVTPVTRGVRVASFMWIQSMIRDDKKRAMLFELDKNIQSLKSRYGENEEILSLLNLYHNLLREWSEI.

In terms of domain architecture, Fe2OG dioxygenase spans 78-177 (TLSTPLFNRY…RVASFMWIQS (100 aa)). Fe cation-binding residues include His-96, Asp-98, and His-158. Arg-168 provides a ligand contact to 2-oxoglutarate.

Fe(2+) serves as cofactor. Requires L-ascorbate as cofactor.

This chain is PKHD-type hydroxylase YbiX, found in Shigella boydii serotype 18 (strain CDC 3083-94 / BS512).